The sequence spans 728 residues: Catalase-peroxidase 1 (728 aa).

A signal peptide spans 1 to 22 (MDKTQSSQGKCPVMHGANSAVA). A cross-link (tryptophyl-tyrosyl-methioninium (Trp-Tyr) (with M-251)) is located at residues 97–225 (WHSAGTYRVA…LAAVMMGLIY (129 aa)). Catalysis depends on histidine 98, which acts as the Proton acceptor. Residues 225-251 (YVNPEGVDGKPDPLRTAQDVRVTFARM) constitute a cross-link (tryptophyl-tyrosyl-methioninium (Tyr-Met) (with W-97)). Residue histidine 266 coordinates heme b.

It belongs to the peroxidase family. Peroxidase/catalase subfamily. Homodimer or homotetramer. Heme b is required as a cofactor. Formation of the three residue Trp-Tyr-Met cross-link is important for the catalase, but not the peroxidase activity of the enzyme.

It carries out the reaction H2O2 + AH2 = A + 2 H2O. It catalyses the reaction 2 H2O2 = O2 + 2 H2O. Its function is as follows. Bifunctional enzyme with both catalase and broad-spectrum peroxidase activity. In Shewanella sp. (strain MR-4), this protein is Catalase-peroxidase 1.